The primary structure comprises 159 residues: MNIDIVCVGRIKERYLTDAIAEYSKRLSRYCKLNIIEVADEKTPEHASEGVGRQIKAKEGERIAKHLKDGAFVIALAINGKQLSSEELAAKINDLGLRGTSHIQLVIGGSIGLDDAILRRADFLLSFSKMTFPHQLMRVILLEQIYRAYKINAHEPYHK.

S-adenosyl-L-methionine contacts are provided by residues Leu-76, Gly-108, and 127–132 (FSKMTF).

Belongs to the RNA methyltransferase RlmH family. As to quaternary structure, homodimer.

The protein localises to the cytoplasm. It catalyses the reaction pseudouridine(1915) in 23S rRNA + S-adenosyl-L-methionine = N(3)-methylpseudouridine(1915) in 23S rRNA + S-adenosyl-L-homocysteine + H(+). Functionally, specifically methylates the pseudouridine at position 1915 (m3Psi1915) in 23S rRNA. In Bifidobacterium longum subsp. infantis (strain ATCC 15697 / DSM 20088 / JCM 1222 / NCTC 11817 / S12), this protein is Ribosomal RNA large subunit methyltransferase H.